The primary structure comprises 373 residues: Transaldolase (373 aa).

Catalysis depends on Lys-143, which acts as the Schiff-base intermediate with substrate.

Belongs to the transaldolase family. Type 2 subfamily.

The protein resides in the cytoplasm. It catalyses the reaction D-sedoheptulose 7-phosphate + D-glyceraldehyde 3-phosphate = D-erythrose 4-phosphate + beta-D-fructose 6-phosphate. Its pathway is carbohydrate degradation; pentose phosphate pathway; D-glyceraldehyde 3-phosphate and beta-D-fructose 6-phosphate from D-ribose 5-phosphate and D-xylulose 5-phosphate (non-oxidative stage): step 2/3. Its function is as follows. Transaldolase is important for the balance of metabolites in the pentose-phosphate pathway. The chain is Transaldolase (tal) from Mycobacterium bovis (strain ATCC BAA-935 / AF2122/97).